The following is a 436-amino-acid chain: UPF0229 protein mll9637 (436 aa).

The tract at residues 54-103 (IPRKGTGEPTFGDDKESGRRQHILPGNRTFSSGDLIPKPGGGGGYGSAAG) is disordered.

Belongs to the UPF0229 family.

This chain is UPF0229 protein mll9637, found in Mesorhizobium japonicum (strain LMG 29417 / CECT 9101 / MAFF 303099) (Mesorhizobium loti (strain MAFF 303099)).